The following is a 282-amino-acid chain: tRNA uridine(34) hydroxylase (282 aa).

A Rhodanese domain is found at 128–222 (EGRPVVMLDT…YFEEVGGSHY (95 aa)). C182 (cysteine persulfide intermediate) is an active-site residue.

The protein belongs to the TrhO family.

The enzyme catalyses uridine(34) in tRNA + AH2 + O2 = 5-hydroxyuridine(34) in tRNA + A + H2O. Its function is as follows. Catalyzes oxygen-dependent 5-hydroxyuridine (ho5U) modification at position 34 in tRNAs. This chain is tRNA uridine(34) hydroxylase, found in Cupriavidus necator (strain ATCC 17699 / DSM 428 / KCTC 22496 / NCIMB 10442 / H16 / Stanier 337) (Ralstonia eutropha).